Reading from the N-terminus, the 540-residue chain is Putative rhamnogalacturonase (540 aa).

The N-terminal stretch at 1–23 (MGFLTLFHMAFLAVSLFVSGALA) is a signal peptide. Cystine bridges form between Cys-53-Cys-100 and Cys-192-Cys-203. Residue Asn-89 is glycosylated (N-linked (GlcNAc...) asparagine). N-linked (GlcNAc...) asparagine glycosylation occurs at Asn-368.

This sequence belongs to the polysaccharide lyase 4 family.

It localises to the secreted. The catalysed reaction is Endotype eliminative cleavage of L-alpha-rhamnopyranosyl-(1-&gt;4)-alpha-D-galactopyranosyluronic acid bonds of rhamnogalacturonan I domains in ramified hairy regions of pectin leaving L-rhamnopyranose at the reducing end and 4-deoxy-4,5-unsaturated D-galactopyranosyluronic acid at the non-reducing end.. Functionally, could be a pectinolytic enzyme that hydrolyzes the alpha-L-rhamnopyranosyl-(1,4)-alpha-D-galacturonopyranosyl glycosidic linkage by beta-elimination, thereby generating oligosaccharides terminating at the non-reducing end with a hex-4-enopyranosyluronic acid residue. The sequence is that of Putative rhamnogalacturonase (asd-1) from Neurospora crassa (strain ATCC 24698 / 74-OR23-1A / CBS 708.71 / DSM 1257 / FGSC 987).